The following is an 87-amino-acid chain: Small ribosomal subunit protein bS16 (87 aa).

This sequence belongs to the bacterial ribosomal protein bS16 family.

The polypeptide is Small ribosomal subunit protein bS16 (Buchnera aphidicola subsp. Baizongia pistaciae (strain Bp)).